A 177-amino-acid polypeptide reads, in one-letter code: Probable inosine/xanthosine triphosphatase (177 aa).

The protein belongs to the YjjX NTPase family. Homodimer. Mg(2+) is required as a cofactor. Requires Mn(2+) as cofactor.

It catalyses the reaction XTP + H2O = XDP + phosphate + H(+). The catalysed reaction is ITP + H2O = IDP + phosphate + H(+). Phosphatase that hydrolyzes non-canonical purine nucleotides such as XTP and ITP to their respective diphosphate derivatives. Probably excludes non-canonical purines from DNA/RNA precursor pool, thus preventing their incorporation into DNA/RNA and avoiding chromosomal lesions. The sequence is that of Probable inosine/xanthosine triphosphatase from Pyrobaculum arsenaticum (strain DSM 13514 / JCM 11321 / PZ6).